A 937-amino-acid polypeptide reads, in one-letter code: MVNLRGYNWKSQQLLLFLIIVAAWEAGSGQLHYSVPEEAKHGTFVGRIAQDLGLELTELVPRLFRVASKDRGDLLEVNLQNGILFVNSRIDREELCGRSAECSIHLEVIVDRPLQVFHVEVEVKDINDNPPMFPATQKALFILESRLLDSRFPLEGASDADVGSNALLTYRLSTNEHFSLDVPPNHEQVKPLGLVLRKPLDREEAAEIRLLLTATDGGKPELTGTVQLLITVLDVNDNAPVFDRSLYTVKLPENVPNGTLVIKVNASDLDEGVNGDVMYSFSSDVSSDIKSKFHMDTVSGEITVIGIIDFEESKAYKIPLEARDKGFPQLPGHCTILVEVVDANDNAPQLTVSSLSLPVSEDSQPGRVVTLISVFDRDSGANGQVTCSLTPHIPFKLVSTFKNYYSLVLDSALDRETIANYDVIVTARDGGSPSLWATASVSVEVADVNDNAPLFAQPEYTVFVKENNPPGAHIFTVSAMDADAQENALVSYSLVERRVGERLLSSYVSVHAESGKVFALQPLDHEELELLQFQVSARDAGVPALGSNVTLQVFVLDENDNAPTLLGPLANGVGGTMNEVVSRALVPGQVVAKVRAVDEDSGYNAWLSFELQPVAGGVRSPFRVGLYTGEISTTRALEETDALRQCLLVLVKDHGEPSLTATATVLLSLVDSGQTQKVSSKVSAGASRVDQRLVDVNVYLIIAICAVSSLLVLTLLLYTALRCSATPTDGACAPGKPMLVCSSAVGSWSYSQQRRQRVCSGEGPPKTDLMAFSPSLPQGPSSTDNPRQPNPDWRYSASLRAGMHSSVHLEEAGILRAGPGGPDQQWPTVSSATPEPEAGEVSPPVGAGVNSNSWTFKYGPGNPKQSGPGELPDKFIIPGSPAIISIRQEPANNQIDKSDFITFGKKEETKKKKKKKKGNKTQEKKEKGNSTTDNSDQ.

The N-terminal stretch at 1–29 (MVNLRGYNWKSQQLLLFLIIVAAWEAGSG) is a signal peptide. The Extracellular portion of the chain corresponds to 30 to 697 (QLHYSVPEEA…RVDQRLVDVN (668 aa)). 6 Cadherin domains span residues 34-133 (SVPE…PPMF), 157-242 (ASDA…APVF), 243-350 (DRSL…APQL), 351-455 (TVSS…APLF), 456-565 (AQPE…APTL), and 587-682 (PGQV…SSKV). An intrachain disulfide couples Cys-96 to Cys-102. O-linked (Man) threonine glycans are attached at residues Thr-223 and Thr-225. 2 N-linked (GlcNAc...) asparagine glycosylation sites follow: Asn-257 and Asn-265. Thr-438 carries O-linked (Man) threonine glycosylation. The O-linked (Man) serine glycan is linked to Ser-478. Asn-548 carries an N-linked (GlcNAc...) asparagine glycan. The helical transmembrane segment at 698 to 718 (VYLIIAICAVSSLLVLTLLLY) threads the bilayer. The Cytoplasmic portion of the chain corresponds to 719 to 937 (TALRCSATPT…GNSTTDNSDQ (219 aa)). 2 disordered regions span residues 755-794 (RQRVCSGEGPPKTDLMAFSPSLPQGPSSTDNPRQPNPDWR) and 816-843 (RAGPGGPDQQWPTVSSATPEPEAGEVSP). PXXP repeat units follow at residues 774–777 (PSLP), 786–789 (PRQP), 819–822 (PGGP), 860–863 (PGNP), and 878–881 (PGSP). Residues 774–881 (PSLPQGPSST…PDKFIIPGSP (108 aa)) form a 5 X 4 AA repeats of P-X-X-P region. Positions 775–787 (SLPQGPSSTDNPR) are enriched in polar residues. The segment at 887-937 (RQEPANNQIDKSDFITFGKKEETKKKKKKKKGNKTQEKKEKGNSTTDNSDQ) is disordered. A compositionally biased stretch (basic and acidic residues) spans 896 to 910 (DKSDFITFGKKEETK).

In terms of assembly, forms homodimers in trans (molecules expressed by two different cells). Forms promiscuous heterodimers in cis (at the plasma membrane of the same cell) with other protocadherins.

The protein localises to the cell membrane. Its function is as follows. Calcium-dependent cell-adhesion protein involved in cells self-recognition and non-self discrimination. Thereby, it is involved in the establishment and maintenance of specific neuronal connections in the brain. The polypeptide is Protocadherin alpha-7 (Mus musculus (Mouse)).